A 500-amino-acid polypeptide reads, in one-letter code: Protein psiE (500 aa).

A signal peptide spans 1–18 (MKLISVLITFLLATVIYS). Asparagine 59 carries an N-linked (GlcNAc...) asparagine glycan. Residues 114 to 256 (TYDTTRKIYV…KDYCGVCQGD (143 aa)) enclose the PA14 domain. 5 N-linked (GlcNAc...) asparagine glycosylation sites follow: asparagine 314, asparagine 341, asparagine 366, asparagine 420, and asparagine 469.

This sequence belongs to the prespore-cell-inducing factor family.

It localises to the secreted. The protein is Protein psiE (psiE) of Dictyostelium discoideum (Social amoeba).